A 308-amino-acid polypeptide reads, in one-letter code: uncharacterized protein (308 aa).

An N-terminal signal peptide occupies residues 1-19 (MKLLLILILIINNYNLCLS). N-linked (GlcNAc...) asparagine glycosylation is found at Asn-25 and Asn-300.

It localises to the secreted. This is an uncharacterized protein from Dictyostelium discoideum (Social amoeba).